The following is a 302-amino-acid chain: Recombination-associated protein RdgC (302 aa).

This sequence belongs to the RdgC family.

It is found in the cytoplasm. The protein localises to the nucleoid. May be involved in recombination. The polypeptide is Recombination-associated protein RdgC (Proteus mirabilis (strain HI4320)).